The primary structure comprises 122 residues: Double-headed protease inhibitor, submandibular gland (122 aa).

2 Kazal-like domains span residues 10–70 and 71–121; these read GGRK…ECDI and ECTQ…QCQS. 6 cysteine pairs are disulfide-bonded: cysteine 16–cysteine 50, cysteine 28–cysteine 47, cysteine 36–cysteine 68, cysteine 72–cysteine 101, cysteine 79–cysteine 98, and cysteine 87–cysteine 119.

Its subcellular location is the secreted. In terms of biological role, this inhibitor is composed of two homologous actively inhibiting halves: one which inhibits trypsin, the other which inhibits elastase. The polypeptide is Double-headed protease inhibitor, submandibular gland (Martes martes (European pine marten)).